The chain runs to 235 residues: MGQKVNPIGLRLGINRTWDSRWFANTNEYGQLLHEDLKIRTYIENELKQAAISKVVIERPHKKCRVTIHSARPGLIIGKKGADIEKLRRKITQMTNAETHLNIVEVRKPEIDARLIAQSIAQQLERRVAFRRAMKRAVQSAMRLGAEGIRINCTGRLGGAEIARIEWYREGRVPLHTLRADIDYGTAEAKTAYGVCGVKVWVFKGEILEHDPMASERRAVEGAGDGGGQRRRENA.

The KH type-2 domain occupies 39–107; sequence IRTYIENELK…ETHLNIVEVR (69 aa). Residues 215 to 235 are disordered; it reads SERRAVEGAGDGGGQRRRENA.

Belongs to the universal ribosomal protein uS3 family. As to quaternary structure, part of the 30S ribosomal subunit. Forms a tight complex with proteins S10 and S14.

Binds the lower part of the 30S subunit head. Binds mRNA in the 70S ribosome, positioning it for translation. The chain is Small ribosomal subunit protein uS3 from Chelativorans sp. (strain BNC1).